The sequence spans 317 residues: Cytochrome f (317 aa).

The N-terminal stretch at 1–34 (MKGLKNQIMKKTSLFICTLLFILSIVFYPKITFA) is a signal peptide. Residues Y35, C55, C58, and H59 each contribute to the heme site. A helical transmembrane segment spans residues 284-304 (VIGLIAFFIGVGLTQILLVLK).

The protein belongs to the cytochrome f family. In terms of assembly, the 4 large subunits of the cytochrome b6-f complex are cytochrome b6, subunit IV (17 kDa polypeptide, PetD), cytochrome f and the Rieske protein, while the 4 small subunits are PetG, PetL, PetM and PetN. The complex functions as a dimer. Requires heme as cofactor.

The protein localises to the cellular thylakoid membrane. Component of the cytochrome b6-f complex, which mediates electron transfer between photosystem II (PSII) and photosystem I (PSI), cyclic electron flow around PSI, and state transitions. In Prochlorococcus marinus (strain MIT 9215), this protein is Cytochrome f.